Reading from the N-terminus, the 287-residue chain is MSNTKEIRSQIICIQNTKKITKAMEMVAVSKMRKTQERMLASLPYAEIIHKVIKHLTLGNLEYKHPYFHERKVKKIGYIVISTDRGLAGSLNINLFKQLLANMKKWNEQGITIELALVGCKAVNFFNLIGSKVIAQVTGITDDPKLSKLIGIIKVMLQAYDNEYLDKLYLVSNKFVNVISQIPQICQILPIPIEDKIDLKMKHWDYIYEPDSKLLLNILLQRYIESQVYQSVVENLASEQAARMVAMKAATENADTLMKELKIVYNKARQNSITQEINEIVAGASAV.

The protein belongs to the ATPase gamma chain family. As to quaternary structure, F-type ATPases have 2 components, CF(1) - the catalytic core - and CF(0) - the membrane proton channel. CF(1) has five subunits: alpha(3), beta(3), gamma(1), delta(1), epsilon(1). CF(0) has three main subunits: a, b and c.

It localises to the cell inner membrane. Its function is as follows. Produces ATP from ADP in the presence of a proton gradient across the membrane. The gamma chain is believed to be important in regulating ATPase activity and the flow of protons through the CF(0) complex. The chain is ATP synthase gamma chain from Baumannia cicadellinicola subsp. Homalodisca coagulata.